Reading from the N-terminus, the 403-residue chain is MAKFNRIHLVVMDSVGIGAAPDANNFVNAGVPDGASDTLGHISKTVGLTVPNMAKIGLGNIERPVPLKTVPQEANPSGYYTKLEEVSLGKDTMTGHWEIMGLNITEPFDTFWNGFPEEILTQIEEFSGRKVIREANKPYSGTAVIDDFGPRQMETGELIIYTSADPVLQIAAHEEVIPLEELYRICEYARSITLDRPALLGRIIARPYVGEPGNFTRTANRHDYAVSPFEPTVLDKLNEAGIDTYSVGKINDIFNGAGINHDMGHNQSNNHGVDNLVKALKDENFKHGFSFTNLVDFDALYGHRRNPHGYRDCLEEFDARIPEIIENMREDDLLMITADHGNDPTYAGTDHTREYIPLLIFGKSLSGHGHIPVGHFADISATVAENFGVDKAMIGESFLDKLV.

Mn(2+) contacts are provided by D13, D298, H303, D339, H340, and H351.

This sequence belongs to the phosphopentomutase family. Requires Mn(2+) as cofactor.

The protein resides in the cytoplasm. It carries out the reaction 2-deoxy-alpha-D-ribose 1-phosphate = 2-deoxy-D-ribose 5-phosphate. It catalyses the reaction alpha-D-ribose 1-phosphate = D-ribose 5-phosphate. It functions in the pathway carbohydrate degradation; 2-deoxy-D-ribose 1-phosphate degradation; D-glyceraldehyde 3-phosphate and acetaldehyde from 2-deoxy-alpha-D-ribose 1-phosphate: step 1/2. In terms of biological role, isomerase that catalyzes the conversion of deoxy-ribose 1-phosphate (dRib-1-P) and ribose 1-phosphate (Rib-1-P) to deoxy-ribose 5-phosphate (dRib-5-P) and ribose 5-phosphate (Rib-5-P), respectively. This chain is Phosphopentomutase, found in Streptococcus gordonii (strain Challis / ATCC 35105 / BCRC 15272 / CH1 / DL1 / V288).